A 274-amino-acid chain; its full sequence is 3-methyl-2-oxobutanoate hydroxymethyltransferase (274 aa).

Mg(2+) is bound by residues Asp-46 and Asp-85. Residues 46–47, Asp-85, and Lys-114 each bind 3-methyl-2-oxobutanoate; that span reads DS. Glu-116 contributes to the Mg(2+) binding site. Residue Glu-183 is the Proton acceptor of the active site.

It belongs to the PanB family. As to quaternary structure, homodecamer; pentamer of dimers. It depends on Mg(2+) as a cofactor.

It localises to the cytoplasm. The enzyme catalyses 3-methyl-2-oxobutanoate + (6R)-5,10-methylene-5,6,7,8-tetrahydrofolate + H2O = 2-dehydropantoate + (6S)-5,6,7,8-tetrahydrofolate. The protein operates within cofactor biosynthesis; coenzyme A biosynthesis. Functionally, catalyzes the reversible reaction in which hydroxymethyl group from 5,10-methylenetetrahydrofolate is transferred onto alpha-ketoisovalerate to form ketopantoate. The polypeptide is 3-methyl-2-oxobutanoate hydroxymethyltransferase (Aeropyrum pernix (strain ATCC 700893 / DSM 11879 / JCM 9820 / NBRC 100138 / K1)).